The chain runs to 2485 residues: Tyrosine-protein phosphatase non-receptor type 13 (2485 aa).

The region spanning 3–190 is the KIND domain; the sequence is VSLAEALEVR…SGTDQLSCNS (188 aa). The segment at 186 to 220 is disordered; it reads LSCNSEQKPDRSQAIRDRLRGKGLPTGRSSTSDVL. Over residues 192–205 the composition is skewed to basic and acidic residues; it reads QKPDRSQAIRDRLR. Ser-240 bears the Phosphoserine mark. Positions 260–283 are disordered; it reads SDNSGREDSENTFSPYQFKTSGPE. Over residues 270–279 the composition is skewed to polar residues; it reads NTFSPYQFKT. 2 positions are modified to phosphoserine: Ser-301 and Ser-302. Residues 433-467 are disordered; that stretch reads RSEASKRFESSSGLPGVDETLSQGQSQRPSRQYET. Residues 452–465 show a composition bias toward polar residues; sequence TLSQGQSQRPSRQY. A coiled-coil region spans residues 469–504; that stretch reads FEGNLINQEIMLKRQEEELMQLQAKMALRQSRLSLY. Positions 572 to 872 constitute an FERM domain; the sequence is RKVNIMLLNG…YQHKFQLQMR (301 aa). A phosphoserine mark is found at Ser-890, Ser-897, Ser-908, Ser-911, and Ser-914. Disordered regions lie at residues 947–975 and 995–1049; these read QNSS…DLSQ and TVAE…IEDP. Basic and acidic residues predominate over residues 950–971; the sequence is SKEKNDKASWEEKPREMSKSYH. Positions 1020–1032 are enriched in polar residues; that stretch reads KLNNSKSVASLNR. Phosphoserine occurs at positions 1029, 1033, and 1085. Basic and acidic residues predominate over residues 1033-1042; sequence SPERRKHESD. The PDZ 1 domain occupies 1093-1178; that stretch reads LVNLKKDAKY…EDVTLVISQP (86 aa). Disordered regions lie at residues 1227–1258 and 1273–1362; these read HISE…SLSQ and TWQE…SPPK. 3 stretches are compositionally biased toward polar residues: residues 1243–1258, 1273–1288, and 1327–1359; these read SLSS…SLSQ, TWQE…SVIS, and TYSS…FSSS. PDZ domains follow at residues 1368–1452 and 1501–1588; these read EVEL…LEKG and EVKL…LCRP. The segment covering 1608–1630 has biased composition (polar residues); the sequence is AQVLPNSSKDSSQPSCVEQSTSS. 2 disordered regions span residues 1608–1665 and 1715–1751; these read AQVL…DLVT and PNKP…SSMD. Residues 1736–1749 show a composition bias toward low complexity; sequence QSYQPQSESASSSS. PDZ domains are found at residues 1788-1868 and 1882-1965; these read LITL…IGRV and PDIT…ATRN. A disordered region spans residues 1971-1996; it reads PSSKRSAVSAPKSTKGNGSYSVGSCS. A compositionally biased stretch (polar residues) spans 1973–1996; sequence SKRSAVSAPKSTKGNGSYSVGSCS. The region spanning 2213 to 2467 is the Tyrosine-protein phosphatase domain; that stretch reads PSKELENLQE…IFCYQVILYV (255 aa). Residues Asp-2378, 2408–2414, and Gln-2452 each bind substrate; that span reads CSAGIGR. Cys-2408 acts as the Phosphocysteine intermediate in catalysis. The tract at residues 2408 to 2414 is substrate; sequence CSAGIGR.

This sequence belongs to the protein-tyrosine phosphatase family. Non-receptor class subfamily. Interacts (via the first PDZ domain) with PLEKHA1 and PLEKHA2. Interacts (via the second PDZ domain) with TNFRSF6 (Fas receptor) (via C-terminus). Interacts (via the second PDZ domain) with TRIP6 (via the third LIM domain and C-terminus). Interacts (via the third PDZ domain) with NGFR (via C-terminal SVP motif) and PKN2 (via C-terminus). Interacts (via the second or fourth PDZ domains) with PDLIM4 (via C-terminus only or via combined C-terminus and LIM domain, but not LIM domain only). Found in a complex with PDLIM4 and TRIP6. Interacts with PDLIM4; this interaction results in dephosphorylation of SRC 'Tyr-419' by this protein leading to its inactivation. Interacts with BRD7. Interacts with RAPGEF6. Interacts with ARHGAP29. Interacts with PIK3R2; dephosphorylates PIK3R2. Interacts with FBXL2. Interacts (via the FERM domain) with ENTR1. Found in a complex with ENTR1, PTPN13 and GIT1. Expressed in keratinocytes (at protein level). Present in most tissues with the exception of the liver and skeletal muscle. Most abundant in lung, kidney and fetal brain.

It localises to the cytoplasm. Its subcellular location is the cytoskeleton. It is found in the nucleus. The protein resides in the cell projection. The protein localises to the lamellipodium. It carries out the reaction O-phospho-L-tyrosyl-[protein] + H2O = L-tyrosyl-[protein] + phosphate. Functionally, tyrosine phosphatase which negatively regulates FAS-induced apoptosis and NGFR-mediated pro-apoptotic signaling. May regulate phosphoinositide 3-kinase (PI3K) signaling through dephosphorylation of PIK3R2. This Homo sapiens (Human) protein is Tyrosine-protein phosphatase non-receptor type 13 (PTPN13).